The chain runs to 364 residues: MSLESIKYTRGSLEILDQLLLPLQTRYIKVRGVEDGWKVINKMQVRGAPAIAIVGCLSLAVELSPDNESSKKNMRQEIEGKLNYLVSARPTAVNIKLAADELINLANTLCADDSISAEIFKERFIGSIEDMLTKDIHDNKAIGSLGCEAILKNIDGDSPVRVLTHCNTGSLATAGYGTALGVIRSLHATKRLEHVFCTETRPYNQGARLTAYELVHEKIPSTLMVDSMVSALMHTRKIHAVIVGADRVAANGDTANKMGTYQIAIVAKYHDVPFYVAAPLTSIDMSLPYGEKIKIEERPDREMTHIGEHRIAAPGINCWNPSFDVTPASLIAGIITEKGVFAPDHLKSVKXHVTGKKYYNIIHI.

Aspartate 246 serves as the catalytic Proton donor.

It belongs to the eIF-2B alpha/beta/delta subunits family. MtnA subfamily.

It is found in the cytoplasm. The protein localises to the nucleus. It carries out the reaction 5-(methylsulfanyl)-alpha-D-ribose 1-phosphate = 5-(methylsulfanyl)-D-ribulose 1-phosphate. It functions in the pathway amino-acid biosynthesis; L-methionine biosynthesis via salvage pathway; L-methionine from S-methyl-5-thio-alpha-D-ribose 1-phosphate: step 1/6. In terms of biological role, catalyzes the interconversion of methylthioribose-1-phosphate (MTR-1-P) into methylthioribulose-1-phosphate (MTRu-1-P). The sequence is that of Methylthioribose-1-phosphate isomerase from Bombyx mori (Silk moth).